The primary structure comprises 564 residues: Iron-sensing transcriptional repressor (564 aa).

Residues 12–36 form a GATA-type 1 zinc finger; the sequence is CSNCHKTTTSLWRRGPDNSLLCNAC. The segment at 100–170 is disordered; that stretch reads ASKSQSGRKS…SSPPHEPSVT (71 aa). Serine 109 carries the post-translational modification Phosphoserine. Residues 109 to 120 are compositionally biased toward low complexity; sequence SLSPNPSSVPSS. The segment covering 135-148 has biased composition (polar residues); the sequence is QIVSDTTTETSNGT. The segment at 172–196 adopts a GATA-type 2 zinc-finger fold; sequence CQNCATTNTPLWRRDESGNPICNAC. 3 disordered regions span residues 226–285, 381–409, and 443–496; these read GNAN…NTGV, DSSK…NPLG, and LLNP…VQGS. Composition is skewed to polar residues over residues 240-253, 260-271, 381-407, and 450-486; these read SGDS…QSTR, SFPNGNGHASGN, DSSK…QSNP, and PSNS…SPVS.

In terms of assembly, interacts with tup11.

The protein localises to the nucleus. With respect to regulation, activated by iron. In terms of biological role, transcriptional repressor that binds the consensus promoter sequence 5'-[AT]GATAA-3' during iron-replete conditions to down-regulate transcription of target genes. Represses the expression of the iron transporter fio1 in response to high iron concentrations. Also represses the expression of str1, str2 and str3. Represses the expression of shu1 in presence of iron. In Schizosaccharomyces pombe (strain 972 / ATCC 24843) (Fission yeast), this protein is Iron-sensing transcriptional repressor.